Reading from the N-terminus, the 321-residue chain is Acetyl-coenzyme A carboxylase carboxyl transferase subunit alpha (321 aa).

In terms of domain architecture, CoA carboxyltransferase C-terminal spans 37 to 298 (DLDDEIKRLQ…KQRILSDLED (262 aa)).

This sequence belongs to the AccA family. Acetyl-CoA carboxylase is a heterohexamer composed of biotin carboxyl carrier protein (AccB), biotin carboxylase (AccC) and two subunits each of ACCase subunit alpha (AccA) and ACCase subunit beta (AccD).

Its subcellular location is the cytoplasm. The enzyme catalyses N(6)-carboxybiotinyl-L-lysyl-[protein] + acetyl-CoA = N(6)-biotinyl-L-lysyl-[protein] + malonyl-CoA. The protein operates within lipid metabolism; malonyl-CoA biosynthesis; malonyl-CoA from acetyl-CoA: step 1/1. Its function is as follows. Component of the acetyl coenzyme A carboxylase (ACC) complex. First, biotin carboxylase catalyzes the carboxylation of biotin on its carrier protein (BCCP) and then the CO(2) group is transferred by the carboxyltransferase to acetyl-CoA to form malonyl-CoA. The chain is Acetyl-coenzyme A carboxylase carboxyl transferase subunit alpha from Mannheimia succiniciproducens (strain KCTC 0769BP / MBEL55E).